The chain runs to 325 residues: NADH-quinone oxidoreductase subunit H (325 aa).

The next 8 helical transmembrane spans lie at 11 to 31, 81 to 101, 114 to 134, 154 to 174, 186 to 206, 237 to 257, 265 to 285, and 304 to 324; these read ILIS…CGAF, AIFT…FAIV, IGIL…LFAG, LSYE…AGSF, VWNV…GVAV, FFVG…TLFF, LPPF…FILI, and VCLP…LYNA.

The protein belongs to the complex I subunit 1 family. NDH-1 is composed of 13 different subunits. Subunits NuoA, H, J, K, L, M, N constitute the membrane sector of the complex.

It is found in the cell inner membrane. It carries out the reaction a quinone + NADH + 5 H(+)(in) = a quinol + NAD(+) + 4 H(+)(out). Functionally, NDH-1 shuttles electrons from NADH, via FMN and iron-sulfur (Fe-S) centers, to quinones in the respiratory chain. The immediate electron acceptor for the enzyme in this species is believed to be ubiquinone. Couples the redox reaction to proton translocation (for every two electrons transferred, four hydrogen ions are translocated across the cytoplasmic membrane), and thus conserves the redox energy in a proton gradient. This subunit may bind ubiquinone. This Yersinia pseudotuberculosis serotype O:1b (strain IP 31758) protein is NADH-quinone oxidoreductase subunit H.